The following is a 119-amino-acid chain: Large ribosomal subunit protein bL20 (119 aa).

It belongs to the bacterial ribosomal protein bL20 family.

Binds directly to 23S ribosomal RNA and is necessary for the in vitro assembly process of the 50S ribosomal subunit. It is not involved in the protein synthesizing functions of that subunit. The chain is Large ribosomal subunit protein bL20 from Anoxybacillus flavithermus (strain DSM 21510 / WK1).